Consider the following 94-residue polypeptide: CRISPR-associated endoribonuclease Cas2 (94 aa).

Asp10 is a Mg(2+) binding site.

The protein belongs to the CRISPR-associated endoribonuclease Cas2 protein family. In terms of assembly, homodimer, forms a heterotetramer with a Cas1 homodimer. Mg(2+) serves as cofactor.

Functionally, CRISPR (clustered regularly interspaced short palindromic repeat), is an adaptive immune system that provides protection against mobile genetic elements (viruses, transposable elements and conjugative plasmids). CRISPR clusters contain sequences complementary to antecedent mobile elements and target invading nucleic acids. CRISPR clusters are transcribed and processed into CRISPR RNA (crRNA). Functions as a ssRNA-specific endoribonuclease. Involved in the integration of spacer DNA into the CRISPR cassette. The sequence is that of CRISPR-associated endoribonuclease Cas2 from Leptospira interrogans serogroup Icterohaemorrhagiae serovar Lai (strain 56601).